A 443-amino-acid polypeptide reads, in one-letter code: Magnesium transporter MRS2-10 (443 aa).

The tract at residues 1–33 is disordered; it reads MSELKERLLPPRPASAINLRGDAGSRPSPSGRQ. 2 helical membrane-spanning segments follow: residues 379–399 and 415–435; these read LLLT…GIFG and WVLA…LWYY. Residues 399–401 carry the Required for magnesium transport activity motif; the sequence is GMN.

It belongs to the CorA metal ion transporter (MIT) (TC 1.A.35.5) family. Expressed in the whole plant.

The protein resides in the cell membrane. Its function is as follows. High-affinity magnesium transporter that mediates the influx of magnesium. Involved in tolerance to Aluminum. The sequence is that of Magnesium transporter MRS2-10 (MRS2-10) from Arabidopsis thaliana (Mouse-ear cress).